Reading from the N-terminus, the 565-residue chain is Liver carboxylesterase 1 (565 aa).

The signal sequence occupies residues 1 to 18 (MWLCALALASLAACTAWG). N-linked (GlcNAc...) asparagine glycosylation is present at Asn-79. The cysteines at positions 87 and 116 are disulfide-linked. The Acyl-ester intermediate role is filled by Ser-221. Cys-273 and Cys-284 are disulfide-bonded. Glu-353 (charge relay system) is an active-site residue. N-linked (GlcNAc...) asparagine glycosylation is present at Asn-389. Catalysis depends on His-467, which acts as the Charge relay system. A short sequence motif (prevents secretion from ER) is located at residue Leu-565.

It belongs to the type-B carboxylesterase/lipase family. As to quaternary structure, monomer.

Its subcellular location is the endoplasmic reticulum lumen. It catalyses the reaction a carboxylic ester + H2O = an alcohol + a carboxylate + H(+). Functionally, involved in the detoxification of xenobiotics and in the activation of ester and amide prodrugs. This chain is Liver carboxylesterase 1, found in Oryctolagus cuniculus (Rabbit).